A 708-amino-acid chain; its full sequence is Assimilatory nitrate reductase (708 aa).

Residues 15 to 73 (TKQVPTTCMRCAVGCGHVHLGSENAYGLETVRGDPSHPVNNGLACGRGIRESADPAGEW) form the 4Fe-4S Mo/W bis-MGD-type domain. 4 residues coordinate [4Fe-4S] cluster: C22, C25, C29, and C59. The segment at 586-613 (TTGREADGYNTGVRSRSDTPEEPVARVN) is disordered.

It belongs to the prokaryotic molybdopterin-containing oxidoreductase family. NasA/NapA/NarB subfamily. As to quaternary structure, is probably a monomer. Initially characterized as a dimer of proteins with a MW of 105 and 50 kDa. The cofactor is [4Fe-4S] cluster. Mo-bis(molybdopterin guanine dinucleotide) serves as cofactor.

The protein localises to the cytoplasm. The enzyme catalyses nitrite + 2 oxidized [2Fe-2S]-[ferredoxin] + H2O = nitrate + 2 reduced [2Fe-2S]-[ferredoxin] + 2 H(+). It functions in the pathway nitrogen metabolism; nitrate reduction (assimilation). Inhibited by cyanide and azide. Nitrate reductase is a key enzyme involved in the first step of nitrate assimilation. Catalyzes the reduction of nitrate to nitrite, using ferredoxin as the electron donor. Can use reduced methyl viologen but neither NADPH nor NADH as electron donors. This Haloferax mediterranei (strain ATCC 33500 / DSM 1411 / JCM 8866 / NBRC 14739 / NCIMB 2177 / R-4) (Halobacterium mediterranei) protein is Assimilatory nitrate reductase.